Reading from the N-terminus, the 910-residue chain is Putative disease resistance protein At1g58400 (910 aa).

A coiled-coil region spans residues 15–57; sequence DRLTQEYEQFQGVEDRIAELKSNLNLLKSFLKDAEAKKNTSQM. The 313-residue stretch at 148 to 460 folds into the NB-ARC domain; sequence REREMRQTFS…AEGILEPRHY (313 aa). 191–198 lines the ATP pocket; that stretch reads GMGGLGKT. 2 LRR repeats span residues 580-604 and 605-628; these read LELL…GIGK and LIHL…LGNL.

Belongs to the disease resistance NB-LRR family.

In terms of biological role, potential disease resistance protein. This Arabidopsis thaliana (Mouse-ear cress) protein is Putative disease resistance protein At1g58400.